The following is a 155-amino-acid chain: MEEIQQQTQKEEQKHREEEEEEEEGPPPGWESAVLPPPIVTITAAVNPNPTTVEIPEKAQMVCGSCRRLLSYLRGSKHVKCSSCQTVNLVLEANQVGQVNCNNCKLLLMYPYGAPAVRCSSCNSVTDISENNKRPPWSEQQGPLKSLSSLRRAEN.

Methionine 1 is subject to N-acetylmethionine. Positions 1–35 are disordered; sequence MEEIQQQTQKEEQKHREEEEEEEEGPPPGWESAVL. 2 putative zinc finger regions span residues 60–90 and 98–128; these read QMVCGSCRRLLSYLRGSKHVKCSSCQTVNLV and QVNCNNCKLLLMYPYGAPAVRCSSCNSVTDI. The segment at 130-155 is disordered; the sequence is ENNKRPPWSEQQGPLKSLSSLRRAEN. Positions 138–149 are enriched in polar residues; it reads SEQQGPLKSLSS.

It localises to the nucleus. Its function is as follows. Putative zinc finger that may be involved in programmed cell death and defense response. The protein is Protein LOL2 (LOL2) of Arabidopsis thaliana (Mouse-ear cress).